The chain runs to 177 residues: Transmembrane protein 190 (177 aa).

Positions 1-21 are cleaved as a signal peptide; the sequence is MLGCGIPALGLLLLLQGSADG. The Extracellular portion of the chain corresponds to 22 to 81; that stretch reads NGIQGFFYPWSCEGDIWDRESCGGQAAIDSPNLCLRLRCCYRNGVCYHQRPDENVRRKHM. Residues 31 to 71 form the P-type domain; sequence WSCEGDIWDRESCGGQAAIDSPNLCLRLRCCYRNGVCYHQR. Disulfide bonds link cysteine 33–cysteine 61, cysteine 43–cysteine 60, and cysteine 55–cysteine 67. A helical membrane pass occupies residues 82–102; it reads WALVWTCSGLLLLSCSICLFW. Topologically, residues 103–177 are cytoplasmic; the sequence is WAKRRDVLHM…EETEGEEEED (75 aa). Positions 131–177 are disordered; the sequence is KHRGTKKTPSTGSVPVALSKESRDVEGGTEGEGTEEGEETEGEEEED. The segment covering 157 to 177 has biased composition (acidic residues); it reads GGTEGEGTEEGEETEGEEEED.

It localises to the membrane. This is Transmembrane protein 190 (TMEM190) from Homo sapiens (Human).